We begin with the raw amino-acid sequence, 426 residues long: Glutamyl-tRNA reductase (426 aa).

Substrate-binding positions include 49–52 (TCNR), S109, 114–116 (EGQ), and Q120. C50 functions as the Nucleophile in the catalytic mechanism. Residue 189–194 (GAGKMS) participates in NADP(+) binding.

The protein belongs to the glutamyl-tRNA reductase family. In terms of assembly, homodimer.

It carries out the reaction (S)-4-amino-5-oxopentanoate + tRNA(Glu) + NADP(+) = L-glutamyl-tRNA(Glu) + NADPH + H(+). Its pathway is porphyrin-containing compound metabolism; protoporphyrin-IX biosynthesis; 5-aminolevulinate from L-glutamyl-tRNA(Glu): step 1/2. It participates in porphyrin-containing compound metabolism; chlorophyll biosynthesis. Functionally, catalyzes the NADPH-dependent reduction of glutamyl-tRNA(Glu) to glutamate 1-semialdehyde (GSA). This chain is Glutamyl-tRNA reductase, found in Thermosynechococcus vestitus (strain NIES-2133 / IAM M-273 / BP-1).